The chain runs to 275 residues: Adenylate kinase (275 aa).

ATP is bound at residue 54–59; the sequence is GAGKGT. The tract at residues 74 to 103 is NMP; sequence ATGDMLRSQVAKKTPLGREAKKIMDQGGLV. Residues T75, R80, 101-103, 130-133, and Q137 each bind AMP; these read GLV and GFPR. The segment at 171 to 208 is LID; sequence GRLVHPASGRSYHRVFNPPKAEMKDDITGEPLVSRSDD. ATP contacts are provided by residues R172 and 181 to 182; that span reads SY. AMP-binding residues include R205 and R216. Q244 contacts ATP.

The protein belongs to the adenylate kinase family. AK2 subfamily. As to quaternary structure, monomer.

It localises to the cytoplasm. Its subcellular location is the cytosol. The protein localises to the mitochondrion intermembrane space. It carries out the reaction AMP + ATP = 2 ADP. In terms of biological role, catalyzes the reversible transfer of the terminal phosphate group between ATP and AMP. Plays an important role in cellular energy homeostasis and in adenine nucleotide metabolism. Adenylate kinase activity is critical for regulation of the phosphate utilization and the AMP de novo biosynthesis pathways. The sequence is that of Adenylate kinase (adk1) from Sclerotinia sclerotiorum (strain ATCC 18683 / 1980 / Ss-1) (White mold).